Reading from the N-terminus, the 322-residue chain is MLNSFKLSLQYILPKLWLTRLAGWGARKRAGWLTKLVIDLFVKYYKVDMKEAQKPDTASYRTFNDFFVRPLRDDVRPVNTDPNVLVMPADGVISQSGKIEEDKILQAKGHNYSLEALLAGNYLMADLFRNGSFVTTYLSPRDYHRVHMPCNGILREMIYVPGDLFSVNHLTAQNVPNLFARNERVICLFDTEFGPMAQILVGATIVGSIETVWAGTITPPREGVIKRWTWPEGESEGSVALLKGQEMGRFKLGSTVINLFAPGKVTLAEQLQSLSVTKIGQPLAVSTELFVTPEAEPAPLPEEEINAEHDASPLVDDKKDES.

Residues Asp-90, His-147, and Ser-254 each act as charge relay system; for autoendoproteolytic cleavage activity in the active site. Ser-254 (schiff-base intermediate with substrate; via pyruvic acid; for decarboxylase activity) is an active-site residue. Ser-254 bears the Pyruvic acid (Ser); by autocatalysis mark. The segment at 294–322 (EAEPAPLPEEEINAEHDASPLVDDKKDES) is disordered. The span at 306-322 (NAEHDASPLVDDKKDES) shows a compositional bias: basic and acidic residues.

It belongs to the phosphatidylserine decarboxylase family. PSD-B subfamily. Prokaryotic type I sub-subfamily. Heterodimer of a large membrane-associated beta subunit and a small pyruvoyl-containing alpha subunit. The cofactor is pyruvate. Is synthesized initially as an inactive proenzyme. Formation of the active enzyme involves a self-maturation process in which the active site pyruvoyl group is generated from an internal serine residue via an autocatalytic post-translational modification. Two non-identical subunits are generated from the proenzyme in this reaction, and the pyruvate is formed at the N-terminus of the alpha chain, which is derived from the carboxyl end of the proenzyme. The autoendoproteolytic cleavage occurs by a canonical serine protease mechanism, in which the side chain hydroxyl group of the serine supplies its oxygen atom to form the C-terminus of the beta chain, while the remainder of the serine residue undergoes an oxidative deamination to produce ammonia and the pyruvoyl prosthetic group on the alpha chain. During this reaction, the Ser that is part of the protease active site of the proenzyme becomes the pyruvoyl prosthetic group, which constitutes an essential element of the active site of the mature decarboxylase.

It localises to the cell membrane. The enzyme catalyses a 1,2-diacyl-sn-glycero-3-phospho-L-serine + H(+) = a 1,2-diacyl-sn-glycero-3-phosphoethanolamine + CO2. It participates in phospholipid metabolism; phosphatidylethanolamine biosynthesis; phosphatidylethanolamine from CDP-diacylglycerol: step 2/2. Functionally, catalyzes the formation of phosphatidylethanolamine (PtdEtn) from phosphatidylserine (PtdSer). The polypeptide is Phosphatidylserine decarboxylase proenzyme (Citrobacter koseri (strain ATCC BAA-895 / CDC 4225-83 / SGSC4696)).